We begin with the raw amino-acid sequence, 299 residues long: MAATGGGADDESRSGRSSSDGECAVAPEPLAEAGGLVSFADFGVSLGSGAGLPGRSVGRAQSSLRYLQVLWQQDVEPRDELRCKIPAGRLRRAARPHRRLGPTGKEVHALKRLRDSANANDVETVQQLLEDGADPCAADDKGRTALHFASCNGNDQIVQLLLDHGADPNQQDGLGNTPLHLAACTNHVPVITTLLRGGARVDALDRAGRTPLHLAKSKLNILQEGHSQCLEAVRLEVKQIIHMLREYLERLGRHEQRERLDDLCTRLQMTSTKEQVDEVTDLLASFTSLSLQMQSMEKR.

The segment at 1–27 (MAATGGGADDESRSGRSSSDGECAVAP) is disordered. Position 2 is an N-acetylalanine (Ala-2). Ser-62 is modified (phosphoserine). Residues 98-116 (RRLGPTGKEVHALKRLRDS) carry the Nuclear localization signal (NLS) motif. ANK repeat units lie at residues 108 to 137 (HALK…DPCA), 141 to 170 (KGRT…DPNQ), 174 to 203 (LGNT…RVDA), and 207 to 239 (AGRT…EVKQ). The interval 140–240 (DKGRTALHFA…EAVRLEVKQI (101 aa)) is LYN-binding. Residues 282 to 292 (LLASFTSLSLQ) carry the Nuclear export signal (NES) motif.

Interacts (via ankyrin repeat region) with LYN (via SH3-domain) in an activation-independent status of LYN. Forms a multiprotein complex with LYN and HCLS1. Interacts with TSN2, VAV1, DBNL and LASP1. Expressed in a variety of hemopoietic cell lines and tissue with high levels in testis. Highly expressed in ciliated cells.

It is found in the nucleus. The protein localises to the cytoplasm. Its subcellular location is the midbody. Functionally, plays an important role in regulating intracellular signaling events associated with erythroid terminal differentiation. This Mus musculus (Mouse) protein is Ankyrin repeat domain-containing protein 54 (Ankrd54).